We begin with the raw amino-acid sequence, 413 residues long: Alpha-1-antitrypsin 1-4 (413 aa).

A signal peptide spans 1–24 (MTPSISWSLLLLAGLCCLVPSFLA). N-linked (GlcNAc...) asparagine glycosylation is found at N64, N101, and N265. The RCL stretch occupies residues 368–387 (AATVLQVATYSMPPIVRFDH).

The protein belongs to the serpin family.

It is found in the secreted. Functionally, inhibitor of serine proteases. Can inhibit trypsin and chymotrypsin; relatively ineffective against elastase. This chain is Alpha-1-antitrypsin 1-4 (Serpina1d), found in Mus musculus (Mouse).